The following is a 156-amino-acid chain: Small ribosomal subunit protein uS7 (156 aa).

Belongs to the universal ribosomal protein uS7 family. Part of the 30S ribosomal subunit. Contacts proteins S9 and S11.

Functionally, one of the primary rRNA binding proteins, it binds directly to 16S rRNA where it nucleates assembly of the head domain of the 30S subunit. Is located at the subunit interface close to the decoding center, probably blocks exit of the E-site tRNA. The polypeptide is Small ribosomal subunit protein uS7 (Novosphingobium aromaticivorans (strain ATCC 700278 / DSM 12444 / CCUG 56034 / CIP 105152 / NBRC 16084 / F199)).